The primary structure comprises 195 residues: Small ribosomal subunit protein uS4c (195 aa).

Positions 82–143 (MRLDNILFRL…KQRSKALIQN (62 aa)) constitute an S4 RNA-binding domain.

This sequence belongs to the universal ribosomal protein uS4 family. Part of the 30S ribosomal subunit. Contacts protein S5. The interaction surface between S4 and S5 is involved in control of translational fidelity.

It localises to the plastid. The protein resides in the chloroplast. Functionally, one of the primary rRNA binding proteins, it binds directly to 16S rRNA where it nucleates assembly of the body of the 30S subunit. In terms of biological role, with S5 and S12 plays an important role in translational accuracy. This is Small ribosomal subunit protein uS4c (rps4) from Pillansia templemannii.